The sequence spans 432 residues: Polyamine export protein (432 aa).

The 201-residue stretch at 1-201 folds into the CNNM transmembrane domain; the sequence is MIMELFHTIL…AEAGVLKTQE (201 aa). 4 helical membrane-spanning segments follow: residues 2–22, 61–81, 100–120, and 138–158; these read IMEL…SAVV, FITV…GIGE, WIAP…FILF, and LSVV…VWFF. CBS domains lie at 220–279 and 286–345; these read MTTR…NENV and LLRK…SNEE.

Belongs to the UPF0053 family. PaeA subfamily.

It is found in the cell inner membrane. Involved in cadaverine and putrescine tolerance in stationary phase. May facilitate the efflux of both cadaverine and putrescine from the cytoplasm, reducing potentially toxic levels under certain stress conditions. In Haemophilus influenzae (strain ATCC 51907 / DSM 11121 / KW20 / Rd), this protein is Polyamine export protein.